We begin with the raw amino-acid sequence, 215 residues long: Probable transaldolase (215 aa).

Lys-83 acts as the Schiff-base intermediate with substrate in catalysis.

This sequence belongs to the transaldolase family. Type 3B subfamily.

The protein resides in the cytoplasm. The catalysed reaction is D-sedoheptulose 7-phosphate + D-glyceraldehyde 3-phosphate = D-erythrose 4-phosphate + beta-D-fructose 6-phosphate. It participates in carbohydrate degradation; pentose phosphate pathway; D-glyceraldehyde 3-phosphate and beta-D-fructose 6-phosphate from D-ribose 5-phosphate and D-xylulose 5-phosphate (non-oxidative stage): step 2/3. Functionally, transaldolase is important for the balance of metabolites in the pentose-phosphate pathway. In Clostridium kluyveri (strain NBRC 12016), this protein is Probable transaldolase.